The primary structure comprises 404 residues: Voltage-gated potassium channel subunit beta-3 (404 aa).

A compositionally biased stretch (polar residues) spans 1 to 14 (MQVSIACTEQNLRS). The interval 1–77 (MQVSIACTEQ…LRESTGRGTG (77 aa)) is disordered. Residues 28–50 (PGGGNGGPAGGGHGNPPGGGGSG) show a composition bias toward gly residues. 4 residues coordinate NADP(+): T97, W98, Q104, and D126. Y131 (proton donor/acceptor) is an active-site residue. Residues N199, S229, R230, Q255, W284, P286, L287, A288, C289, K295, R305, G364, S366, Q370, and E373 each coordinate NADP(+).

This sequence belongs to the shaker potassium channel beta subunit family. Forms heteromultimeric complex with alpha subunits. Interacts with KCNA5 and KCNB2. As to expression, brain specific. Most prominent expression in cerebellum. Weaker signals detected in cortex, occipital lobe, frontal lobe and temporal lobe. Not detected in spinal cord, heart, lung, liver, kidney, pancreas, placenta and skeletal muscle.

Its subcellular location is the cytoplasm. Its function is as follows. Regulatory subunit of the voltage-gated potassium (Kv) channels composed of pore-forming and potassium-conducting alpha subunits and of regulatory beta subunit. The beta-3/KCNAB3 subunit may mediate closure of potassium channels. Increases inactivation of Kv1.5/KCNA5 alpha subunit-containing channels. May display nicotinamide adenine dinucleotide phosphate (NADPH)-dependent aldoketoreductase activity. The binding of oxidized and reduced NADP(H) cofactors may be required for the regulation of potassium channel activity. This is Voltage-gated potassium channel subunit beta-3 from Homo sapiens (Human).